Reading from the N-terminus, the 513-residue chain is 2-isopropylmalate synthase (513 aa).

Positions 5–268 constitute a Pyruvate carboxyltransferase domain; the sequence is LIIFDTTLRD…DVGVDTSQIV (264 aa). The Mn(2+) site is built by Asp14, His202, His204, and Asn239. The segment at 394-513 is regulatory domain; the sequence is RFISLSQRSE…KAVQKINPQI (120 aa).

This sequence belongs to the alpha-IPM synthase/homocitrate synthase family. LeuA type 1 subfamily. As to quaternary structure, homodimer. It depends on Mn(2+) as a cofactor.

Its subcellular location is the cytoplasm. The enzyme catalyses 3-methyl-2-oxobutanoate + acetyl-CoA + H2O = (2S)-2-isopropylmalate + CoA + H(+). The protein operates within amino-acid biosynthesis; L-leucine biosynthesis; L-leucine from 3-methyl-2-oxobutanoate: step 1/4. Catalyzes the condensation of the acetyl group of acetyl-CoA with 3-methyl-2-oxobutanoate (2-ketoisovalerate) to form 3-carboxy-3-hydroxy-4-methylpentanoate (2-isopropylmalate). In Cupriavidus pinatubonensis (strain JMP 134 / LMG 1197) (Cupriavidus necator (strain JMP 134)), this protein is 2-isopropylmalate synthase.